Reading from the N-terminus, the 412-residue chain is Lipid droplet organization protein LDO45 (412 aa).

Residues 1–170 are Cytoplasmic-facing; the sequence is MAARNRRKNN…TVEKLNALQN (170 aa). A helical membrane pass occupies residues 171–191; it reads SLYEVFWIIFIYLNYWFPNVG. Residues 192-247 are Lumenal-facing; that stretch reads DYVSNTFGQQDSIIIRISLSKSHFRALREKSSQKVQQAVKNIYFCFQEKPYLTAFK. Residues 248–268 traverse the membrane as a helical segment; the sequence is VSFAIGLVIPCSLLFLIMVST. Over 269-271 the chain is Cytoplasmic; that stretch reads ATF. The helical transmembrane segment at 272–292 threads the bilayer; the sequence is FFFVYLTLFVVIGFFSSLFII. Pro-293 is a topological domain (lumenal). The chain crosses the membrane as a helical span at residues 294-314; that stretch reads LLGISFVFAIGVVSFGFCSNM. At 315-412 the chain is on the cytoplasmic side; the sequence is SFKMAQLIYV…NKAGNKFQLS (98 aa). A disordered region spans residues 347-374; it reads QEPQEPLSTLRPVSNPTIPSPLRQTARP. The segment covering 357–373 has biased composition (polar residues); that stretch reads RPVSNPTIPSPLRQTAR.

As to quaternary structure, interacts specifically with the seipin complex FLD1-LDB16. Only a fraction appears to associate with the seipin core components, suggesting that it may be an ancillary subunit of the complex.

It localises to the endoplasmic reticulum membrane. It is found in the lipid droplet. Its function is as follows. Involved in lipid droplet (LD) organization. Modulates triglyceride (TAG) storage by reducing DGA1 LD localization. Promotes LD targeting of some proteins, including PDR16. This Saccharomyces cerevisiae (strain ATCC 204508 / S288c) (Baker's yeast) protein is Lipid droplet organization protein LDO45.